Consider the following 310-residue polypeptide: Olfactory receptor 5P54 (310 aa).

Residues 1 to 25 (MNGGNHTSMTELFILGPTEDPTFCI) are Extracellular-facing. Asn-5 carries an N-linked (GlcNAc...) asparagine glycan. A helical membrane pass occupies residues 26 to 46 (AFFVIFLGVYMVTLVGNISII). At 47–54 (TLIRISSQ) the chain is on the cytoplasmic side. A helical transmembrane segment spans residues 55–75 (LHTPVYLFLNHLAFVDILYST). Over 76–99 (LVSVIMLMELLEHELALPVAACAA) the chain is Extracellular. Cys-97 and Cys-189 are disulfide-bonded. Residues 100-120 (ELCITVLFGSSECFLLAAMAY) traverse the membrane as a helical segment. The Cytoplasmic segment spans residues 121–133 (DCYVAICSPLLYS). Residues 134-154 (TLMSSRVCFLLLGMSYVGGCM) form a helical membrane-spanning segment. The Extracellular portion of the chain corresponds to 155–196 (NGWIFTGCLLNLSFYGPYQIDHFFCDFSPLLKLSCSDVSIIG). N-linked (GlcNAc...) asparagine glycosylation is present at Asn-165. Residues 197–217 (IIPSISSGSIIVVTVLVIAVF) form a helical membrane-spanning segment. The Cytoplasmic portion of the chain corresponds to 218–237 (YICILMTILKMHSTDGCHKA). A helical membrane pass occupies residues 238–258 (FSTCNSYLTAVTLYYGTITFI). Residues 259–271 (YVMPKSNYSTEKN) lie on the Extracellular side of the membrane. The N-linked (GlcNAc...) asparagine glycan is linked to Asn-265. A helical membrane pass occupies residues 272 to 292 (KVLSEFYTVVIPMLNHLIYSL). The Cytoplasmic segment spans residues 293–310 (KNRDVKDALRKAIVRVYT).

It belongs to the G-protein coupled receptor 1 family.

The protein localises to the cell membrane. Its function is as follows. Potential odorant receptor. This Mus musculus (Mouse) protein is Olfactory receptor 5P54.